The chain runs to 264 residues: Wtf element wtf11 (264 aa).

The span at 1-12 (MNSNYVPLTSSV) shows a compositional bias: polar residues. A disordered region spans residues 1-26 (MNSNYVPLTSSVDVEEKMESENGVDL). 4 helical membrane-spanning segments follow: residues 107–127 (LLFV…VIFG), 145–165 (LSWF…YDFW), 180–200 (WKNT…GFFV), and 217–237 (SLFA…FETL).

Belongs to the WTF family.

It is found in the membrane. Functionally, may act in meiotic drive. The polypeptide is Wtf element wtf11 (Schizosaccharomyces pombe (strain 972 / ATCC 24843) (Fission yeast)).